Here is a 213-residue protein sequence, read N- to C-terminus: Uridine kinase (213 aa).

Position 15–22 (15–22 (GASASGKS)) interacts with ATP.

This sequence belongs to the uridine kinase family.

The protein localises to the cytoplasm. The enzyme catalyses uridine + ATP = UMP + ADP + H(+). It carries out the reaction cytidine + ATP = CMP + ADP + H(+). It participates in pyrimidine metabolism; CTP biosynthesis via salvage pathway; CTP from cytidine: step 1/3. Its pathway is pyrimidine metabolism; UMP biosynthesis via salvage pathway; UMP from uridine: step 1/1. This chain is Uridine kinase, found in Yersinia enterocolitica serotype O:8 / biotype 1B (strain NCTC 13174 / 8081).